A 373-amino-acid polypeptide reads, in one-letter code: Peptide chain release factor 2 (373 aa).

The residue at position 251 (glutamine 251) is an N5-methylglutamine.

It belongs to the prokaryotic/mitochondrial release factor family. Post-translationally, methylated by PrmC. Methylation increases the termination efficiency of RF2.

It is found in the cytoplasm. Functionally, peptide chain release factor 2 directs the termination of translation in response to the peptide chain termination codons UGA and UAA. The sequence is that of Peptide chain release factor 2 from Salinispora tropica (strain ATCC BAA-916 / DSM 44818 / JCM 13857 / NBRC 105044 / CNB-440).